Reading from the N-terminus, the 192-residue chain is MPNWGGGKKCGVCQKAVYFAEEVQCEGSSFHKSCFLCMVCKKNLDSTTVAVHGDEIYCKSCYGKKYGPKGYGYGMGAGTLSTDKGESLGIKYEEGQSHRPTNPNASRMAQKVGGSDGCPRCGQAVYAAEKVIGAGKSWHKSCFRCAKCGKSLESTTLADKDGEIYCKGCYAKNFGPKGFGFGQGAGALIHSQ.

Positions 10 to 61 constitute an LIM zinc-binding 1 domain; that stretch reads CGVCQKAVYFAEEVQCEGSSFHKSCFLCMVCKKNLDSTTVAVHGDEIYCKSC. The Nuclear localization signal signature appears at 64–69; that stretch reads KKYGPK. One can recognise an LIM zinc-binding 2 domain in the interval 118-169; it reads CPRCGQAVYAAEKVIGAGKSWHKSCFRCAKCGKSLESTTLADKDGEIYCKGC.

Probable monomer. Interacts with ZYX. In terms of tissue distribution, most prominent in tissues that are enriched in smooth muscle cells, such as gizzard, stomach, and intestine. Lower level in the heart, no expression in liver, skeletal muscle, or brain.

Its subcellular location is the nucleus. The protein localises to the cytoplasm. It is found in the cytoskeleton. Heat stable protein, that interacts with zyxin/ZYX. May be a component of a signal transduction pathway that mediates adhesion-stimulated changes in gene expression. This Gallus gallus (Chicken) protein is Cysteine and glycine-rich protein 1 (CSRP1).